We begin with the raw amino-acid sequence, 74 residues long: Salivary glue protein Sgs-7 (74 aa).

A signal peptide spans 1–23 (MKLIAVTIIACILLIGFSDLALG).

The chain is Salivary glue protein Sgs-7 (Sgs7) from Drosophila melanogaster (Fruit fly).